The chain runs to 277 residues: Digeranylgeranylglyceryl phosphate synthase (277 aa).

8 helical membrane-spanning segments follow: residues 16 to 36 (ILAG…IPPV), 40 to 60 (ILIF…NDYF), 93 to 113 (FIGL…ALGA), 129 to 149 (FIGN…GAVG), 153 to 173 (IDLA…REIM), 199 to 218 (SGII…FLPV), 222 to 244 (IGLG…IDVL), and 253 to 273 (GQKI…LGAL).

Belongs to the UbiA prenyltransferase family. DGGGP synthase subfamily. Mg(2+) is required as a cofactor.

Its subcellular location is the cell membrane. It carries out the reaction sn-3-O-(geranylgeranyl)glycerol 1-phosphate + (2E,6E,10E)-geranylgeranyl diphosphate = 2,3-bis-O-(geranylgeranyl)-sn-glycerol 1-phosphate + diphosphate. The protein operates within membrane lipid metabolism; glycerophospholipid metabolism. Its function is as follows. Prenyltransferase that catalyzes the transfer of the geranylgeranyl moiety of geranylgeranyl diphosphate (GGPP) to the C2 hydroxyl of (S)-3-O-geranylgeranylglyceryl phosphate (GGGP). This reaction is the second ether-bond-formation step in the biosynthesis of archaeal membrane lipids. In Pyrococcus horikoshii (strain ATCC 700860 / DSM 12428 / JCM 9974 / NBRC 100139 / OT-3), this protein is Digeranylgeranylglyceryl phosphate synthase.